Consider the following 360-residue polypeptide: Peptide chain release factor 1 (360 aa).

Position 237 is an N5-methylglutamine (glutamine 237).

It belongs to the prokaryotic/mitochondrial release factor family. In terms of processing, methylated by PrmC. Methylation increases the termination efficiency of RF1.

It is found in the cytoplasm. In terms of biological role, peptide chain release factor 1 directs the termination of translation in response to the peptide chain termination codons UAG and UAA. The chain is Peptide chain release factor 1 (prfA) from Pseudomonas aeruginosa (strain ATCC 15692 / DSM 22644 / CIP 104116 / JCM 14847 / LMG 12228 / 1C / PRS 101 / PAO1).